The primary structure comprises 360 residues: Peptide chain release factor 1 (360 aa).

At Gln-237 the chain carries N5-methylglutamine.

This sequence belongs to the prokaryotic/mitochondrial release factor family. Post-translationally, methylated by PrmC. Methylation increases the termination efficiency of RF1.

Its subcellular location is the cytoplasm. Peptide chain release factor 1 directs the termination of translation in response to the peptide chain termination codons UAG and UAA. The sequence is that of Peptide chain release factor 1 from Pseudomonas entomophila (strain L48).